The sequence spans 434 residues: Homoserine dehydrogenase (434 aa).

Residues threonine 13 and valine 14 each contribute to the NADPH site. NAD(+) is bound by residues valine 14, alanine 33, and alanine 43. Position 14 (valine 14) interacts with NADP(+). Arginine 45 serves as a coordination point for NADPH. NADP(+) is bound by residues arginine 45, arginine 46, and lysine 103. Lysine 103 lines the NADPH pocket. Residues glutamate 127, valine 130, glycine 132, and isoleucine 134 each coordinate Na(+). Positions 185 and 188 each coordinate NADP(+). L-homoserine contacts are provided by glutamate 188 and aspartate 199. The Proton donor role is filled by lysine 203. Glycine 300 contacts NADPH. NAD(+) is bound at residue glycine 300. Residue glycine 300 coordinates NADP(+). The region spanning 353–429 is the ACT domain; that stretch reads YLRIQAKDHP…GVSGPVVRIR (77 aa).

This sequence belongs to the homoserine dehydrogenase family. It depends on a metal cation as a cofactor.

The catalysed reaction is L-homoserine + NADP(+) = L-aspartate 4-semialdehyde + NADPH + H(+). It catalyses the reaction L-homoserine + NAD(+) = L-aspartate 4-semialdehyde + NADH + H(+). The protein operates within amino-acid biosynthesis; L-methionine biosynthesis via de novo pathway; L-homoserine from L-aspartate: step 3/3. Its pathway is amino-acid biosynthesis; L-threonine biosynthesis; L-threonine from L-aspartate: step 3/5. Feedback inhibition by threonine. Its function is as follows. Catalyzes the conversion of L-aspartate-beta-semialdehyde (L-Asa) to L-homoserine (L-Hse), the third step in the biosynthesis of threonine and methionine from aspartate. The chain is Homoserine dehydrogenase (hom) from Pseudomonas aeruginosa (strain ATCC 15692 / DSM 22644 / CIP 104116 / JCM 14847 / LMG 12228 / 1C / PRS 101 / PAO1).